Consider the following 396-residue polypeptide: Elongation factor Tu (396 aa).

Residues lysine 10–glutamate 206 form the tr-type G domain. Residues glycine 19 to threonine 26 form a G1 region. Glycine 19–threonine 26 provides a ligand contact to GTP. Residue threonine 26 coordinates Mg(2+). The segment at glycine 60–asparagine 64 is G2. Residues aspartate 81–glycine 84 form a G3 region. GTP contacts are provided by residues aspartate 81–histidine 85 and asparagine 136–aspartate 139. The interval asparagine 136–aspartate 139 is G4. Residues serine 174 to lysine 176 form a G5 region.

The protein belongs to the TRAFAC class translation factor GTPase superfamily. Classic translation factor GTPase family. EF-Tu/EF-1A subfamily. In terms of assembly, monomer.

Its subcellular location is the cytoplasm. It catalyses the reaction GTP + H2O = GDP + phosphate + H(+). Functionally, GTP hydrolase that promotes the GTP-dependent binding of aminoacyl-tRNA to the A-site of ribosomes during protein biosynthesis. This is Elongation factor Tu from Thiomonas delicata (Thiomonas cuprina).